A 398-amino-acid polypeptide reads, in one-letter code: G2/mitotic-specific cyclin-B2 (398 aa).

At Thr-8 the chain carries Phosphothreonine. Ser-11, Ser-77, and Ser-92 each carry phosphoserine. Phosphothreonine is present on Thr-94. 3 positions are modified to phosphoserine: Ser-99, Ser-392, and Ser-398.

It belongs to the cyclin family. Cyclin AB subfamily. As to quaternary structure, interacts with the CDK1 protein kinase to form a serine/threonine kinase holoenzyme complex also known as maturation promoting factor (MPF). The cyclin subunit imparts substrate specificity to the complex.

In terms of biological role, essential for the control of the cell cycle at the G2/M (mitosis) transition. The chain is G2/mitotic-specific cyclin-B2 (CCNB2) from Homo sapiens (Human).